Here is a 423-residue protein sequence, read N- to C-terminus: Serine--tRNA ligase (423 aa).

Basic and acidic residues-rich tracts occupy residues 1–24 and 62–71; these read MIDL…RGED and KMRDASPEEK. Residues 1–71 form a disordered region; it reads MIDLKQLRDD…KMRDASPEEK (71 aa). An L-serine-binding site is contributed by 230-232; the sequence is TSE. Residues 261 to 263 and valine 277 contribute to the ATP site; that span reads RRE. Position 284 (glutamate 284) interacts with L-serine. 348–351 lines the ATP pocket; the sequence is ELTS. Position 383 (threonine 383) interacts with L-serine.

Belongs to the class-II aminoacyl-tRNA synthetase family. Type-1 seryl-tRNA synthetase subfamily. Homodimer. The tRNA molecule binds across the dimer.

Its subcellular location is the cytoplasm. It carries out the reaction tRNA(Ser) + L-serine + ATP = L-seryl-tRNA(Ser) + AMP + diphosphate + H(+). The enzyme catalyses tRNA(Sec) + L-serine + ATP = L-seryl-tRNA(Sec) + AMP + diphosphate + H(+). It functions in the pathway aminoacyl-tRNA biosynthesis; selenocysteinyl-tRNA(Sec) biosynthesis; L-seryl-tRNA(Sec) from L-serine and tRNA(Sec): step 1/1. Functionally, catalyzes the attachment of serine to tRNA(Ser). Is also able to aminoacylate tRNA(Sec) with serine, to form the misacylated tRNA L-seryl-tRNA(Sec), which will be further converted into selenocysteinyl-tRNA(Sec). The protein is Serine--tRNA ligase of Corynebacterium kroppenstedtii (strain DSM 44385 / JCM 11950 / CIP 105744 / CCUG 35717).